A 229-amino-acid polypeptide reads, in one-letter code: Ribosome maturation factor RimM (229 aa).

A disordered region spans residues 1–39 (MAGHDSGSAKRGRSPSFGVFVRKPVERAPTKGAGDGAAD). Residues 148–229 (ADEFYWVDLI…RIVVDWEADY (82 aa)) enclose the PRC barrel domain.

It belongs to the RimM family. As to quaternary structure, binds ribosomal protein uS19.

The protein resides in the cytoplasm. In terms of biological role, an accessory protein needed during the final step in the assembly of 30S ribosomal subunit, possibly for assembly of the head region. Essential for efficient processing of 16S rRNA. May be needed both before and after RbfA during the maturation of 16S rRNA. It has affinity for free ribosomal 30S subunits but not for 70S ribosomes. This Burkholderia thailandensis (strain ATCC 700388 / DSM 13276 / CCUG 48851 / CIP 106301 / E264) protein is Ribosome maturation factor RimM.